Consider the following 371-residue polypeptide: Interstrand DNA cross-link repair glycosylase (371 aa).

A QXQ; important for activity motif is present at residues 37–39 (QAQ).

This sequence belongs to the DNA glycosylase AlkZ-like family.

In terms of biological role, DNA glycosylase involved in the repair of interstrand DNA cross-links (ICLs), which are highly toxic DNA lesions that covalently tether the opposing strands of DNA, thereby inhibiting essential cellular processes such as DNA replication and transcription. Acts by unhooking both sides of the ICLs, forming abasic (AP) sites on both strands. AlkZ specifically repairs DNA damage induced by azinomycin B (AZB), a natural product with potent antibiotic and antitumor activities that interacts covalently with duplex DNA and forms ICLs. AlkZ thus confers self-resistance to azinomycin B, which is produced by S.sahachiroi. It may also protect target sites by protein-DNA interaction. Binds sequence non-specifically to native DNA and structure-specifically to azinomycin B-modified sites, with higher affinity to azinomycin B-modified sites and lower affinity to native DNA duplex. In vitro, also acts on monoadducts and can catalyze the excision of N7-methylguanine (7mGua) from an oligonucleotide containing N7-methyldeoxyguanosine (d7mG). Is a monofunctional DNA glycosylase that does not have lyase activity. The polypeptide is Interstrand DNA cross-link repair glycosylase (Streptomyces sahachiroi).